A 201-amino-acid polypeptide reads, in one-letter code: Lipopolysaccharide core heptose(II)-phosphate phosphatase (201 aa).

The first 33 residues, 1 to 33 (MLAFTLRFIKNKRYFAILAGALVIIAGLASQHA), serve as a signal peptide directing secretion.

This sequence belongs to the phosphoglycerate mutase family. Ais subfamily.

It localises to the periplasm. The protein operates within bacterial outer membrane biogenesis; lipopolysaccharide metabolism. Functionally, catalyzes the dephosphorylation of heptose(II) of the outer membrane lipopolysaccharide core. This chain is Lipopolysaccharide core heptose(II)-phosphate phosphatase, found in Salmonella typhi.